Consider the following 201-residue polypeptide: Translation initiation factor IF-3 (201 aa).

The protein belongs to the IF-3 family. In terms of assembly, monomer.

Its subcellular location is the cytoplasm. In terms of biological role, IF-3 binds to the 30S ribosomal subunit and shifts the equilibrium between 70S ribosomes and their 50S and 30S subunits in favor of the free subunits, thus enhancing the availability of 30S subunits on which protein synthesis initiation begins. The polypeptide is Translation initiation factor IF-3 (Mycoplasma pneumoniae (strain ATCC 29342 / M129 / Subtype 1) (Mycoplasmoides pneumoniae)).